Here is a 224-residue protein sequence, read N- to C-terminus: 7-cyano-7-deazaguanine synthase (224 aa).

An ATP-binding site is contributed by 9 to 19 (LSGGLDSATVL). 4 residues coordinate Zn(2+): Cys189, Cys199, Cys202, and Cys205.

This sequence belongs to the QueC family. Zn(2+) serves as cofactor.

It carries out the reaction 7-carboxy-7-deazaguanine + NH4(+) + ATP = 7-cyano-7-deazaguanine + ADP + phosphate + H2O + H(+). The protein operates within purine metabolism; 7-cyano-7-deazaguanine biosynthesis. In terms of biological role, catalyzes the ATP-dependent conversion of 7-carboxy-7-deazaguanine (CDG) to 7-cyano-7-deazaguanine (preQ(0)). The polypeptide is 7-cyano-7-deazaguanine synthase (Ralstonia pickettii (strain 12J)).